The sequence spans 199 residues: dTTP/UTP pyrophosphatase (199 aa).

The active-site Proton acceptor is the Asp79.

It belongs to the Maf family. YhdE subfamily. A divalent metal cation is required as a cofactor.

Its subcellular location is the cytoplasm. The catalysed reaction is dTTP + H2O = dTMP + diphosphate + H(+). The enzyme catalyses UTP + H2O = UMP + diphosphate + H(+). Functionally, nucleoside triphosphate pyrophosphatase that hydrolyzes dTTP and UTP. May have a dual role in cell division arrest and in preventing the incorporation of modified nucleotides into cellular nucleic acids. This chain is dTTP/UTP pyrophosphatase, found in Porphyromonas gingivalis (strain ATCC 33277 / DSM 20709 / CIP 103683 / JCM 12257 / NCTC 11834 / 2561).